The sequence spans 428 residues: Serine--tRNA ligase (428 aa).

231–233 (TAE) provides a ligand contact to L-serine. 262–264 (RSE) serves as a coordination point for ATP. Glu-285 provides a ligand contact to L-serine. 349 to 352 (EISS) contacts ATP. L-serine is bound at residue Ser-385.

The protein belongs to the class-II aminoacyl-tRNA synthetase family. Type-1 seryl-tRNA synthetase subfamily. In terms of assembly, homodimer. The tRNA molecule binds across the dimer.

It is found in the cytoplasm. It carries out the reaction tRNA(Ser) + L-serine + ATP = L-seryl-tRNA(Ser) + AMP + diphosphate + H(+). It catalyses the reaction tRNA(Sec) + L-serine + ATP = L-seryl-tRNA(Sec) + AMP + diphosphate + H(+). It functions in the pathway aminoacyl-tRNA biosynthesis; selenocysteinyl-tRNA(Sec) biosynthesis; L-seryl-tRNA(Sec) from L-serine and tRNA(Sec): step 1/1. Its function is as follows. Catalyzes the attachment of serine to tRNA(Ser). Is also able to aminoacylate tRNA(Sec) with serine, to form the misacylated tRNA L-seryl-tRNA(Sec), which will be further converted into selenocysteinyl-tRNA(Sec). This is Serine--tRNA ligase from Staphylococcus epidermidis (strain ATCC 35984 / DSM 28319 / BCRC 17069 / CCUG 31568 / BM 3577 / RP62A).